The sequence spans 226 residues: DELTA-alicitoxin-Pse1b (226 aa).

The signal sequence occupies residues 1–21 (MRHFVVFLYMFLALSIPTAFA). Residues 22-45 (KKHIVTKKGNHQDITNDNEGENAE) constitute a propeptide that is removed on maturation. The tract at residues 50–59 (TVAGAVIAGG) is plays an important role in the hemolytic activity. Residues 58-77 (GGELALKILTKILYEIGKID) are N-terminal region. 6 residues coordinate phosphocholine: Ser-101, Val-134, Ser-152, Pro-154, Tyr-180, and Tyr-184. The trp-rich region, which is important for the binding to lipid membrane stretch occupies residues 152–167 (SVPFDYNLYSNWWNVK).

This sequence belongs to the actinoporin family. Sea anemone subfamily. Octamer or nonamer in membranes. Monomer in the soluble state.

It localises to the secreted. Its subcellular location is the nematocyst. It is found in the target cell membrane. In terms of biological role, pore-forming protein that forms cations-selective hydrophilic pores of around 1 nm and causes cytolysis. Pore formation is a multi-step process that involves specific recognition of membrane sphingomyelin (but neither cholesterol nor phosphatidylcholine) using aromatic rich region and adjacent phosphocholine (POC) binding site, firm binding to the membrane (mainly driven by hydrophobic interactions) accompanied by the transfer of the N-terminal region to the lipid-water interface and finally pore formation after oligomerization of monomers. The protein is DELTA-alicitoxin-Pse1b of Phyllodiscus semoni (Night anemone).